Here is a 545-residue protein sequence, read N- to C-terminus: MAKRIIYNEQARRALERGIDILAESVAVTLGPKGRNVVLEKKFGAPQIINDGVTIAKEIELEDHIENTGVALIRQAASKTNDAAGDGTTTATVLAHAMVKAGLRNVAAGANAITLKKGIDKATEFLVGKIQENSKPISDSNAIAQCGTIAAGNDEEVGQMIANAMDKVGKEGVISLEEGKSMTTELEVTEGMRFDKGYISPYFATDTERMEAVLDEPYILLTDKKIALVQDLVPVLEQIAKTGKPLVIIAEDIEKEALATLVVNRLRGVLNVAAVKAPGFGDRRKAMLEDMAVLTNGQLITEDAGLKLENATLDMLGTGRRITINKETTTIVAEGNEQAVKARCDQIKKQMDETDSSYDKEKLQERLAKLAGGVAVIKVGAATETEMKDKKLRLEDAINATKAAVEEGIVPGGGTTLAHLSPILKEWADKNLEGEELIGANIVEASLTAPLMRIAENAGSNGAVIAENVKTKPFNDGFNAATGEYVDMSSAGIVDPAKVTRSGLQNAASIAGMVLTTECIVADLPEKKDSAAPAGAPGMGGDFDY.

ATP contacts are provided by residues 29–32, 86–90, glycine 413, 479–481, and aspartate 495; these read TLGP, DGTTT, and NAA.

Belongs to the chaperonin (HSP60) family. Forms a cylinder of 14 subunits composed of two heptameric rings stacked back-to-back. Interacts with the co-chaperonin GroES.

The protein resides in the cytoplasm. It carries out the reaction ATP + H2O + a folded polypeptide = ADP + phosphate + an unfolded polypeptide.. Together with its co-chaperonin GroES, plays an essential role in assisting protein folding. The GroEL-GroES system forms a nano-cage that allows encapsulation of the non-native substrate proteins and provides a physical environment optimized to promote and accelerate protein folding. In Prochlorococcus marinus (strain AS9601), this protein is Chaperonin GroEL 2.